A 139-amino-acid chain; its full sequence is Putative nickel-responsive regulator (139 aa).

Ni(2+)-binding residues include H79, H90, H92, and C98.

This sequence belongs to the transcriptional regulatory CopG/NikR family. Ni(2+) is required as a cofactor.

Functionally, transcriptional regulator. This chain is Putative nickel-responsive regulator, found in Nitratidesulfovibrio vulgaris (strain DSM 19637 / Miyazaki F) (Desulfovibrio vulgaris).